We begin with the raw amino-acid sequence, 600 residues long: Leiomodin-1 (600 aa).

Serine 12 is subject to Phosphoserine. Disordered stretches follow at residues 38–61 (VVDP…QSTG), 80–324 (MQRE…PLER), and 472–573 (DKQR…QEKN). Basic and acidic residues-rich tracts occupy residues 80–127 (MQRE…EPKR), 134–240 (FSRD…EKMK), 247–256 (DMKKEDEKVK), 263–292 (DTKK…KTPE), and 472–497 (DKQR…DLLE). Serine 85 and serine 135 each carry phosphoserine. 8 repeat units span residues 165 to 180 (AAVD…RGEE), 181 to 196 (RAVA…GSDR), 197 to 212 (NTGL…EEMK), 213 to 228 (EVAK…GERR), 229 to 244 (NTDT…RAGG), 245 to 260 (NTDM…RGTG), 261 to 276 (NTDT…KNEP), and 277 to 293 (LHEK…TPEK). Positions 165-293 (AAVDKKEAGK…DDSKTKTPEK (129 aa)) are 8 X approximate tandem repeats. Positions 508-527 (SPKPSPQPSPKPSPKNSPKK) are 5 X 4 AA approximate tandem repeats. 2 stretches are compositionally biased toward pro residues: residues 510–522 (KPSP…PSPK) and 532–543 (AAPPPPPPPLAP). Serine 555 is subject to Phosphoserine. Residues 574–593 (SRDQLLAAIRSSNLKQLKKV) form the WH2 domain.

This sequence belongs to the tropomodulin family. In terms of tissue distribution, detected in lung vascular smooth muscle (at protein level). Detected in thyroid and extraocular smooth muscle, but not skeletal muscle. Detected in heart, aorta, skeletal muscle, colon, urinary bladder, uterus, stomach, and small intestine.

Its subcellular location is the cytoplasm. It localises to the myofibril. It is found in the sarcomere. The protein localises to the cytoskeleton. Functionally, required for proper contractility of visceral smooth muscle cells. Mediates nucleation of actin filaments. The polypeptide is Leiomodin-1 (LMOD1) (Homo sapiens (Human)).